A 623-amino-acid chain; its full sequence is E3 ubiquitin-protein ligase ORTHRUS 5 (623 aa).

A PHD-type zinc finger spans residues 12–62; sequence DGVCMRCQVNPPSEETLTCGTCVTPWHVSCLLPESLASSTGDWECPDCSGV. The segment at 129-169 adopts an RING-type 1 zinc-finger fold; the sequence is CSICIQLPERPVTTPCGHNFCLKCFEKWAVGQGKLTCMICR. Positions 258–407 constitute a YDG domain; sequence TRNQGVLVGE…HKMCRYLFVR (150 aa). The RING-type 2 zinc finger occupies 498-555; that stretch reads CQICRKVLSLPVTTPCAHNFCKACLEAKFAGITQLRDRSNGVRKLRAKKNIMTCPCCT. Positions 580-623 are disordered; the sequence is KSEEEAEVAESSNISEEEGEEESEPPTKKIKMDKNSVGGTSLSA. The segment covering 594-603 has biased composition (acidic residues); that stretch reads SEEEGEEESE. Over residues 604 to 613 the composition is skewed to basic and acidic residues; the sequence is PPTKKIKMDK.

In terms of tissue distribution, expressed in inflorescences.

It localises to the nucleus. The catalysed reaction is S-ubiquitinyl-[E2 ubiquitin-conjugating enzyme]-L-cysteine + [acceptor protein]-L-lysine = [E2 ubiquitin-conjugating enzyme]-L-cysteine + N(6)-ubiquitinyl-[acceptor protein]-L-lysine.. It participates in protein modification; protein ubiquitination. E3 ubiquitin-protein ligase. Participates in CpG methylation-dependent transcriptional regulation and epigenetic transcriptional silencing. Mediates ubiquitination with the E2 ubiquitin-conjugating enzyme UBC11. This Arabidopsis thaliana (Mouse-ear cress) protein is E3 ubiquitin-protein ligase ORTHRUS 5 (ORTH5).